Here is a 479-residue protein sequence, read N- to C-terminus: BURP domain-containing protein 4 (479 aa).

The N-terminal stretch at 1-46 is a signal peptide; that stretch reads MVGKGNECAAARRRFSLRAAAASSSSSSFLPCLLLAAALSAGCCRA. The disordered stretch occupies residues 158–177; that stretch reads RADGPPKQPATFPASPNGEK. The 226-residue stretch at 254–479 folds into the BURP domain; sequence LFLMKKLHPG…PQGYVLWLAN (226 aa). Asn445 carries N-linked (GlcNAc...) asparagine glycosylation.

In terms of tissue distribution, expressed in stamen.

This Oryza sativa subsp. japonica (Rice) protein is BURP domain-containing protein 4 (BURP4).